The chain runs to 272 residues: Cell division protein FtsQ (272 aa).

Residues 1-43 lie on the Cytoplasmic side of the membrane; that stretch reads MEYNPPNTRERIVARRQRMRRNSTEPVVPGWRWRLREGLRSGR. A helical membrane pass occupies residues 44 to 64; the sequence is IVSGIVFVISCFALFYVLFSS. Residues 65 to 272 lie on the Extracellular side of the membrane; it reads RFRVQTVEVV…FYQYRPDGSS (208 aa). The POTRA domain maps to 66 to 133; that stretch reads FRVQTVEVVG…DRARIVIVER (68 aa).

The protein belongs to the FtsQ/DivIB family. FtsQ subfamily.

The protein resides in the cell membrane. In terms of biological role, essential cell division protein. In Chloroflexus aurantiacus (strain ATCC 29366 / DSM 635 / J-10-fl), this protein is Cell division protein FtsQ.